The chain runs to 100 residues: MFAVIETGGKQYLVKEGSIIKVEKLEAEEKKEVEINKVICISNNGLSYSSNATVKAEVLEQCRGEKIIIFKKKRRKNYRRKTGHRQYITVLRINEISLQK.

This sequence belongs to the bacterial ribosomal protein bL21 family. As to quaternary structure, part of the 50S ribosomal subunit. Contacts protein L20.

Its function is as follows. This protein binds to 23S rRNA in the presence of protein L20. The chain is Large ribosomal subunit protein bL21 from Wolbachia sp. subsp. Drosophila simulans (strain wRi).